Consider the following 388-residue polypeptide: Nocturnin (388 aa).

Glu-152 serves as a coordination point for Mg(2+). Substrate-binding positions include Glu-152, 176 to 178 (KPW), Asn-220, 243 to 246 (HLKA), 281 to 283 (DFN), and His-371.

The protein belongs to the CCR4/nocturin family. The cofactor is Mg(2+). Expressed only in the photoreceptors of the retina. Expression is controlled by the retinal circadian clock.

The protein resides in the cytoplasm. The protein localises to the nucleus. It localises to the perinuclear region. It is found in the mitochondrion. It carries out the reaction NADP(+) + H2O = phosphate + NAD(+). It catalyses the reaction NADPH + H2O = phosphate + NADH. Functionally, phosphatase which catalyzes the conversion of NADP(+) to NAD(+) and of NADPH to NADH. Shows a small preference for NADPH over NADP(+). Component of the circadian clock or downstream effector of clock function. Exhibits a high amplitude circadian rhythm with maximal levels in early evening. In constant darkness or constant light, the amplitude of the rhythm decreases. In Xenopus laevis (African clawed frog), this protein is Nocturnin.